Reading from the N-terminus, the 156-residue chain is Ribosome maturation factor RimP (156 aa).

This sequence belongs to the RimP family.

The protein resides in the cytoplasm. Functionally, required for maturation of 30S ribosomal subunits. In Bacillus velezensis (strain DSM 23117 / BGSC 10A6 / LMG 26770 / FZB42) (Bacillus amyloliquefaciens subsp. plantarum), this protein is Ribosome maturation factor RimP.